The following is a 257-amino-acid chain: 1-(5-phosphoribosyl)-5-[(5-phosphoribosylamino)methylideneamino] imidazole-4-carboxamide isomerase (257 aa).

The Proton acceptor role is filled by Asp-8. The Proton donor role is filled by Asp-129.

Belongs to the HisA/HisF family.

Its subcellular location is the cytoplasm. It catalyses the reaction 1-(5-phospho-beta-D-ribosyl)-5-[(5-phospho-beta-D-ribosylamino)methylideneamino]imidazole-4-carboxamide = 5-[(5-phospho-1-deoxy-D-ribulos-1-ylimino)methylamino]-1-(5-phospho-beta-D-ribosyl)imidazole-4-carboxamide. It participates in amino-acid biosynthesis; L-histidine biosynthesis; L-histidine from 5-phospho-alpha-D-ribose 1-diphosphate: step 4/9. This chain is 1-(5-phosphoribosyl)-5-[(5-phosphoribosylamino)methylideneamino] imidazole-4-carboxamide isomerase, found in Trichodesmium erythraeum (strain IMS101).